The primary structure comprises 490 residues: Monocarboxylate transporter 3 (490 aa).

At 1-14 (MGAGGPRRGAGPPD) the chain is on the cytoplasmic side. Residues 15 to 35 (GGWGWVVLGACFVITGFAYGF) form a helical membrane-spanning segment. Residues 36–58 (PKAVSVFFRELKRDFGAGYSDTA) are Extracellular-facing. Residues 59 to 79 (WVSSIMLAMLYGTGPLSSILV) form a helical membrane-spanning segment. Topologically, residues 80 to 85 (TRFGCR) are cytoplasmic. Residues 86-106 (PVMLAGGLLASAGMILASFAS) traverse the membrane as a helical segment. At 107–115 (RLLELYLTA) the chain is on the extracellular side. The chain crosses the membrane as a helical span at residues 116–136 (GVLTGLGLALNFQPSLIMLGL). Residues 137–147 (YFERRRPLANG) are Cytoplasmic-facing. The helical transmembrane segment at 148-168 (LAAAGSPVFLSTLSPLGQLLG) threads the bilayer. At 169–172 (ERFG) the chain is on the extracellular side. A helical membrane pass occupies residues 173–193 (WRGGFLLFGGLLLHCCACGAV). Residues 194-230 (MRPPPGPQPRPDPAPPGGRARHRQLLDLAVCTDRTFM) are Cytoplasmic-facing. Residues 231 to 251 (VYMVTKFLMALGLFVPAILLV) form a helical membrane-spanning segment. Over 252-257 (NYAKDA) the chain is Extracellular. Residues 258–278 (GVPDAEAAFLLSIVGFVDIVA) traverse the membrane as a helical segment. Topologically, residues 279 to 293 (RPACGALAGLGRLRP) are cytoplasmic. The chain crosses the membrane as a helical span at residues 294-314 (HVPYLFSLALLANGLTDLISA). The Extracellular portion of the chain corresponds to 315–318 (RARS). A helical membrane pass occupies residues 319 to 339 (YGTLVAFCIAFGLSYGMVGAL). The Cytoplasmic segment spans residues 340 to 352 (QFEVLMATVGAPR). A helical membrane pass occupies residues 353 to 373 (FPSALGLVLLVEAVAVLIGPP). Topologically, residues 374–386 (SAGRLVDALKNYE) are extracellular. A helical membrane pass occupies residues 387–407 (IIFYLAGSEVVLAGVFMAVTT). Topologically, residues 408–490 (YCCQRCSKDI…GGHEAHGQNA (83 aa)) are cytoplasmic. The segment at 419–490 (PGPSAEGGTS…GGHEAHGQNA (72 aa)) is disordered. Basolateral sorting signal regions lie at residues 426–460 (GTSD…VLSP) and 461–480 (RAGS…HESV). Residues 475 to 490 (LSHESVGGHEAHGQNA) show a composition bias toward basic and acidic residues.

Belongs to the major facilitator superfamily. Monocarboxylate porter (TC 2.A.1.13) family. Retinal pigment epithelium.

The protein resides in the basolateral cell membrane. It catalyses the reaction (S)-lactate(in) + H(+)(in) = (S)-lactate(out) + H(+)(out). In terms of biological role, probable retinal pigment epithelium (RPE)-specific proton-coupled L-lactate transporter. May facilitate transport of lactate and H(+) out of the retina and could therefore play a role in pH and ion homeostasis of the outer retina. The protein is Monocarboxylate transporter 3 (Slc16a8) of Rattus norvegicus (Rat).